The primary structure comprises 247 residues: Type II restriction enzyme SmaI (247 aa).

Mg(2+) serves as cofactor. K(+) is required as a cofactor.

The catalysed reaction is Endonucleolytic cleavage of DNA to give specific double-stranded fragments with terminal 5'-phosphates.. A P subtype restriction enzyme that recognizes the double-stranded sequence 5'-CCCGGG-3' and cleaves after C-3. In Serratia marcescens, this protein is Type II restriction enzyme SmaI (smaIR).